The sequence spans 311 residues: p-hydroxybenzoic acid efflux pump subunit AaeA (311 aa).

The helical transmembrane segment at 11–31 (IAITLILVLLGIIAIFKAWVF) threads the bilayer.

It belongs to the membrane fusion protein (MFP) (TC 8.A.1) family.

Its subcellular location is the cell inner membrane. Functionally, forms an efflux pump with AaeB. This chain is p-hydroxybenzoic acid efflux pump subunit AaeA, found in Serratia proteamaculans (strain 568).